Consider the following 1459-residue polypeptide: ARF guanine-nucleotide exchange factor 2 (1459 aa).

Phosphoserine is present on residues Ser-46 and Ser-284. An SEC7 domain is found at 570–714 (FNEKPKKGIP…IIMLNTDLHN (145 aa)). Residues 1412–1459 (EKGNGSSSHGSAHEQTPESNDVEIEATAPIDDNTDDDNKPKLSDVEKD) form a disordered region. Residues 1447-1459 (DDNKPKLSDVEKD) show a composition bias toward basic and acidic residues.

In terms of assembly, interacts (via SEC7 domain) with DRS2 (via C-terminus); the interaction is direct. Interacts with GMH1.

Its subcellular location is the cytoplasm. The protein resides in the cytosol. The protein localises to the membrane. It localises to the golgi apparatus membrane. Activates the ARF proteins by exchanging bound GDP for free GTP. Plays a role in maintaining mitochondrial morphology. Stimulates DRS2 flippase activity. The protein is ARF guanine-nucleotide exchange factor 2 (GEA2) of Saccharomyces cerevisiae (strain ATCC 204508 / S288c) (Baker's yeast).